The primary structure comprises 209 residues: Ribosome maturation factor RimM (209 aa).

Positions 1-28 are disordered; sequence MARRPQRPAPSGRAGAGRGAAGAAPPGP. The PRC barrel domain occupies 123–197; that stretch reads EDEFFTADLV…RVTIAPPEDL (75 aa).

It belongs to the RimM family. As to quaternary structure, binds ribosomal protein uS19.

It localises to the cytoplasm. Functionally, an accessory protein needed during the final step in the assembly of 30S ribosomal subunit, possibly for assembly of the head region. Essential for efficient processing of 16S rRNA. May be needed both before and after RbfA during the maturation of 16S rRNA. It has affinity for free ribosomal 30S subunits but not for 70S ribosomes. The sequence is that of Ribosome maturation factor RimM from Methylobacterium sp. (strain 4-46).